Here is a 269-residue protein sequence, read N- to C-terminus: Hydroxyethylthiazole kinase (269 aa).

Residue methionine 43 participates in substrate binding. ATP is bound by residues arginine 119 and serine 165. Alanine 192 contacts substrate.

This sequence belongs to the Thz kinase family. Mg(2+) serves as cofactor.

The enzyme catalyses 5-(2-hydroxyethyl)-4-methylthiazole + ATP = 4-methyl-5-(2-phosphooxyethyl)-thiazole + ADP + H(+). It functions in the pathway cofactor biosynthesis; thiamine diphosphate biosynthesis; 4-methyl-5-(2-phosphoethyl)-thiazole from 5-(2-hydroxyethyl)-4-methylthiazole: step 1/1. Catalyzes the phosphorylation of the hydroxyl group of 4-methyl-5-beta-hydroxyethylthiazole (THZ). This is Hydroxyethylthiazole kinase from Glaesserella parasuis serovar 5 (strain SH0165) (Haemophilus parasuis).